Reading from the N-terminus, the 445-residue chain is SVP1-like protein 2 (445 aa).

2 WD repeats span residues 218 to 258 and 263 to 302; these read AHKA…LLKE and LDRA…EGTL. Residues 301–321 are disordered; the sequence is TLNPANPEDHQSSGSNGHIKA. Positions 312-321 are enriched in polar residues; sequence SSGSNGHIKA.

Belongs to the WD repeat PROPPIN family.

The protein resides in the vacuole membrane. Its subcellular location is the cytoplasmic vesicle membrane. Its function is as follows. Involved in mitochondrial or peroxisomal functions and amino acid signaling pathways. This is SVP1-like protein 2 (HSV2) from Candida glabrata (strain ATCC 2001 / BCRC 20586 / JCM 3761 / NBRC 0622 / NRRL Y-65 / CBS 138) (Yeast).